The chain runs to 875 residues: Ectonucleotide pyrophosphatase/phosphodiesterase family member 3 (875 aa).

Topologically, residues Met-1–Glu-11 are cytoplasmic. Residues Pro-12–Ala-30 form a helical; Signal-anchor for type II membrane protein membrane-spanning segment. The Extracellular segment spans residues Leu-31–Ile-875. SMB domains lie at His-51–Thr-94 and Gln-95–Pro-139. Disulfide bonds link Cys-55–Cys-72, Cys-59–Cys-90, Cys-70–Cys-83, Cys-76–Cys-82, Cys-99–Cys-116, Cys-104–Cys-134, Cys-114–Cys-127, Cys-120–Cys-126, Cys-145–Cys-191, and Cys-153–Cys-365. Residues Arg-79–Asp-81 carry the Cell attachment site motif. The tract at residues Pro-161–Ala-545 is phosphodiesterase. Asp-168 is a binding site for Zn(2+). Lys-205 provides a ligand contact to ATP. Thr-206 contacts Zn(2+). Residue Thr-206 is the Nucleophile of the active site. Asn-227 is an ATP binding site. A glycan (N-linked (GlcNAc...) asparagine) is linked at Asn-237. Asp-276 lines the ATP pocket. N-linked (GlcNAc...) asparagine glycans are attached at residues Asn-280 and Asn-289. Residue Tyr-290 coordinates ATP. 4 residues coordinate Zn(2+): Asp-326, His-330, Asp-373, and His-374. Disulfide bonds link Cys-381–Cys-478, Cys-429–Cys-818, Cys-562–Cys-623, Cys-575–Cys-679, Cys-577–Cys-664, and Cys-787–Cys-797. Residue His-483 participates in Zn(2+) binding. Residues Asn-533, Asn-574, Asn-594, and Asn-702 are each glycosylated (N-linked (GlcNAc...) asparagine). The nuclease stretch occupies residues Thr-582–Ile-875. Ca(2+)-binding residues include Asp-752, Asn-754, Asp-756, His-758, and Asp-760. The N-linked (GlcNAc...) asparagine glycan is linked to Asn-789.

Belongs to the nucleotide pyrophosphatase/phosphodiesterase family. Monomer and homodimer. Zn(2+) serves as cofactor. In terms of processing, the N-terminal is blocked. N-glycosylated. N-glycosylation is necessary for normal transport to the cell membrane, but is not the apical targeting signal. As to expression, detected in intestinal epithelium and liver (at protein level).

Its subcellular location is the cell membrane. It is found in the apical cell membrane. It localises to the secreted. The enzyme catalyses Hydrolytically removes 5'-nucleotides successively from the 3'-hydroxy termini of 3'-hydroxy-terminated oligonucleotides.. It carries out the reaction a ribonucleoside 5'-triphosphate + H2O = a ribonucleoside 5'-phosphate + diphosphate + H(+). It catalyses the reaction ATP + H2O = AMP + diphosphate + H(+). The catalysed reaction is CTP + H2O = CMP + diphosphate + H(+). The enzyme catalyses GTP + H2O = GMP + diphosphate + H(+). It carries out the reaction UTP + H2O = UMP + diphosphate + H(+). It catalyses the reaction UDP-N-acetyl-alpha-D-glucosamine + H2O = N-acetyl-alpha-D-glucosamine 1-phosphate + UMP + 2 H(+). The catalysed reaction is P(1),P(3)-bis(5'-adenosyl) triphosphate + H2O = AMP + ADP + 2 H(+). The enzyme catalyses P(1),P(4)-bis(5'-adenosyl) tetraphosphate + H2O = AMP + ATP + 2 H(+). It carries out the reaction P(1),P(5)-bis(5'-adenosyl) pentaphosphate + H2O = adenosine 5'-tetraphosphate + AMP + 2 H(+). It catalyses the reaction P(1),P(4)-bis(5'-guanosyl) tetraphosphate + H2O = GMP + GTP + 2 H(+). In terms of biological role, hydrolase that metabolizes extracellular nucleotides, including ATP, GTP, UTP and CTP. Limits mast cells and basophils response during inflammation and during the chronic phases of allergic responses by eliminating extracellular ATP, a signaling molecule activating these cells in an autocrine manner. Metabolizes extracellular ATP in the lumen of the small intestine, and thereby prevents ATP-induced apoptosis of intestinal plasmacytoid dendritic cells. Has a broad specificity and can also hydrolyze UDP-GlcNAc into UMP and GlcNAc-1-phosphate and potentially several other intracellular nucleotide sugars, including UDP-GalNAc, CMP-NeuAc, GDP-Fuc, and UDP-GlcA. Thereby, could modulate glycan biosynthesis and protein glycosylation. Can hydrolyze extracellular dinucleoside polyphosphates, including the vasoactive adenosine polyphosphates as well. In addition, displays an alkaline phosphodiesterase activity in vitro. This chain is Ectonucleotide pyrophosphatase/phosphodiesterase family member 3, found in Rattus norvegicus (Rat).